Reading from the N-terminus, the 358-residue chain is Branched-chain amino acid aminotransferase gloG (358 aa).

Residue arginine 91 participates in pyridoxal 5'-phosphate binding. The active-site Proton acceptor is the lysine 195. Residue lysine 195 is modified to N6-(pyridoxal phosphate)lysine. A pyridoxal 5'-phosphate-binding site is contributed by glutamate 231.

The protein belongs to the class-IV pyridoxal-phosphate-dependent aminotransferase family. Pyridoxal 5'-phosphate serves as cofactor.

The catalysed reaction is L-isoleucine + 2-oxoglutarate = (S)-3-methyl-2-oxopentanoate + L-glutamate. The enzyme catalyses L-leucine + 2-oxoglutarate = 4-methyl-2-oxopentanoate + L-glutamate. It carries out the reaction L-valine + 2-oxoglutarate = 3-methyl-2-oxobutanoate + L-glutamate. It functions in the pathway mycotoxin biosynthesis. In terms of biological role, branched-chain amino acid aminotransferase; part of the gene cluster that mediates the biosynthesis of pneumocandins, lipohexapeptides of the echinocandin family that prevent fungal cell wall formation by non-competitive inhibition of beta-1,3-glucan synthase. The 10,12-dimethylmyristoyl side chain is synthesized by the reducing polyketide synthase gloL/GLPKS4. The thioesterase gloN/GLHYD exclusively interacts with gloL/GLPKS4 to maintain turnover of the polyketide side chain. The 10R,12S-dimethylmyristic acid is then transferred to the first thiolation domain of the nonribosomal peptide synthetase gloA/GLNRPS4 by the acyl-AMP ligase gloD/GLligase, followed by its acylation to L-ornithine to trigger elongation of the cyclic hexapeptide. L-ornithine, 4R-hydroxyl-L-proline (generated from L-proline by the dioxygenase gloF/GLOXY2), 3S-hydroxyl-L-homotyrosine (generated by gloG/GLHtyB, gloH/GLHtyA, gloI/GLHtyC, gloJ/GLHtyD and hydroxylated at C-3 by the dioxygenase gloM/GLOXY1), 3R-hydroxyl-L-glutamine (generated from L-glutamine probably by the dioxygenase gloE/GLOXY3) and 3S-hydroxyl-L-proline (generated from L-proline by the dioxygenase gloF/GLOXY2 to yield pneumocandin B0), or 3S-hydroxyl-4S-methyl-L-proline (generated from L-leucine by the dioxygenase gloC/GLOXY4 to yield pneumocandin A0) are sequentially added to the growing chain. The last C domain of gloA/GLNRPS4 is proposed to be responsible for cyclization by condensation to form the peptide bond between L-ornithine and 3S-hydroxyl-4S-methyl-L-proline (for pneumocandin A0) or 3S-hydroxyl-L-proline (for pneumocandin B0). Finally, the subsequent C-4 hydroxylation of 3S-hydroxyl-L-homotyrosine and L-ornithine dihydroxylation at C-4 and C-5 are performed by the cytochrome P450 monooxygenases gloP/GLP450-1 and gloO/GLP450-2, respectively. The chain is Branched-chain amino acid aminotransferase gloG from Glarea lozoyensis (strain ATCC 20868 / MF5171).